The following is a 154-amino-acid chain: uncharacterized protein (154 aa).

A run of 5 helical transmembrane segments spans residues 5–24 (TLII…GVLL), 29–48 (FYAA…IYAA), 53–75 (PVVV…AIAA), 87–109 (IFWV…SMAV), and 124–146 (ATDY…LSAI).

Its subcellular location is the cell membrane. This is an uncharacterized protein from Archaeoglobus fulgidus (strain ATCC 49558 / DSM 4304 / JCM 9628 / NBRC 100126 / VC-16).